The primary structure comprises 711 residues: Long-chain-fatty-acid--CoA ligase 4 (711 aa).

Residues Leu8–Ile28 form a helical; Signal-anchor for type III membrane protein membrane-spanning segment. Topologically, residues Pro29–Lys711 are cytoplasmic. Ser447 bears the Phosphoserine mark.

The protein belongs to the ATP-dependent AMP-binding enzyme family. Mg(2+) is required as a cofactor.

It is found in the mitochondrion outer membrane. Its subcellular location is the peroxisome membrane. It localises to the microsome membrane. The protein localises to the endoplasmic reticulum membrane. The protein resides in the cell membrane. The catalysed reaction is a long-chain fatty acid + ATP + CoA = a long-chain fatty acyl-CoA + AMP + diphosphate. It carries out the reaction (5Z,8Z,11Z,14Z)-eicosatetraenoate + ATP + CoA = (5Z,8Z,11Z,14Z)-eicosatetraenoyl-CoA + AMP + diphosphate. It catalyses the reaction hexadecanoate + ATP + CoA = hexadecanoyl-CoA + AMP + diphosphate. The enzyme catalyses (E)-hexadec-2-enoate + ATP + CoA = (2E)-hexadecenoyl-CoA + AMP + diphosphate. The catalysed reaction is 15-hydroxy-(5Z,8Z,11Z,13E)-eicosatetraenoate + ATP + CoA = 15-hydroxy-(5Z,8Z,11Z,13E)-eicosatetraenoyl-CoA + AMP + diphosphate. It carries out the reaction 12-hydroxy-(5Z,8Z,10E,14Z)-eicosatetraenoate + ATP + CoA = 12-hydroxy-(5Z,8Z,10E,14Z)-eicosatetraenoyl-CoA + AMP + diphosphate. It catalyses the reaction 5-hydroxy-(6E,8Z,11Z,14Z)-eicosatetraenoate + ATP + CoA = 5-hydroxy-(6E,8Z,11Z,14Z)-eicosatetraenoyl-CoA + AMP + diphosphate. The enzyme catalyses 5,6-epoxy-(8Z,11Z,14Z)-eicosatrienoate + ATP + CoA = 5,6-epoxy-(8Z,11Z,14Z)-eicosatrienoyl-CoA + AMP + diphosphate. The catalysed reaction is 14,15-epoxy-(5Z,8Z,11Z)-eicosatrienoate + ATP + CoA = 14,15-epoxy-(5Z,8Z,11Z)-eicosatrienoyl-CoA + AMP + diphosphate. It carries out the reaction 11,12-epoxy-(5Z,8Z,14Z)-eicosatrienoate + ATP + CoA = 11,12-epoxy-(5Z,8Z,14Z)-eicosatrienoyl-CoA + AMP + diphosphate. It catalyses the reaction 8,9-epoxy-(5Z,11Z,14Z)-eicosatrienoate + ATP + CoA = 8,9-epoxy-(5Z,11Z,14Z)-eicosatrienoyl-CoA + AMP + diphosphate. Both triacsin C and rosiglitazone inhibit arachidonoyl-CoA ligase activity. Functionally, catalyzes the conversion of long-chain fatty acids to their active form acyl-CoA for both synthesis of cellular lipids, and degradation via beta-oxidation. Preferentially activates arachidonate and eicosapentaenoate as substrates. Preferentially activates 8,9-EET &gt; 14,15-EET &gt; 5,6-EET &gt; 11,12-EET. Modulates glucose-stimulated insulin secretion by regulating the levels of unesterified EETs. Modulates prostaglandin E2 secretion. This Homo sapiens (Human) protein is Long-chain-fatty-acid--CoA ligase 4 (ACSL4).